A 79-amino-acid chain; its full sequence is Dolichyl-diphosphooligosaccharide--protein glycosyltransferase subunit DAD1 (79 aa).

The Lumenal segment spans residues 1–19 (AVATALIQVAYMGLVGSFP). A helical transmembrane segment spans residues 20-40 (FNSFLSGVLSCIGTAVLAVCL). Residues 41–58 (RIQVNKDNKEFKDLPPER) are Cytoplasmic-facing. A helical transmembrane segment spans residues 59-79 (AFADFVLCNLVLHLVIMNFLG).

Belongs to the DAD/OST2 family. As to quaternary structure, component of the oligosaccharyltransferase (OST) complex.

Its subcellular location is the endoplasmic reticulum membrane. It participates in protein modification; protein glycosylation. In terms of biological role, subunit of the oligosaccharyl transferase (OST) complex that catalyzes the initial transfer of a defined glycan (Glc(3)Man(9)GlcNAc(2) in eukaryotes) from the lipid carrier dolichol-pyrophosphate to an asparagine residue within an Asn-X-Ser/Thr consensus motif in nascent polypeptide chains, the first step in protein N-glycosylation. N-glycosylation occurs cotranslationally and the complex associates with the Sec61 complex at the channel-forming translocon complex that mediates protein translocation across the endoplasmic reticulum (ER). All subunits are required for a maximal enzyme activity. This chain is Dolichyl-diphosphooligosaccharide--protein glycosyltransferase subunit DAD1 (DAD1), found in Zea mays (Maize).